Here is a 30-residue protein sequence, read N- to C-terminus: Circulin A (30 aa).

Positions 1-30 (GIPCGESCVWIPCISAALGCSCKNKVCYRN) form a cross-link, cyclopeptide (Gly-Asn). 3 disulfide bridges follow: Cys-4–Cys-20, Cys-8–Cys-22, and Cys-13–Cys-27.

This is a cyclic peptide. As to expression, expressed in fruit, pedicel, root and stem but not in leaf (at protein level).

Probably participates in a plant defense mechanism. In Chassalia chartacea (Chassalia curviflora), this protein is Circulin A.